A 194-amino-acid polypeptide reads, in one-letter code: Holliday junction branch migration complex subunit RuvA (194 aa).

Residues 1 to 61 are domain I; the sequence is MIASLSGLLE…EDSVSLYGFA (61 aa). Residues 62-136 form a domain II region; the sequence is SVLECTVFEQ…GKLTSVPLEN (75 aa). Positions 136–140 are flexible linker; sequence NRKQE. Residues 141-194 are domain III; that stretch reads QAVDRSAEIVQALIGLGWQRQESAAAVESVLEKDQSLTMPEILRNALRYLAKQE.

Belongs to the RuvA family. Homotetramer. Forms an RuvA(8)-RuvB(12)-Holliday junction (HJ) complex. HJ DNA is sandwiched between 2 RuvA tetramers; dsDNA enters through RuvA and exits via RuvB. An RuvB hexamer assembles on each DNA strand where it exits the tetramer. Each RuvB hexamer is contacted by two RuvA subunits (via domain III) on 2 adjacent RuvB subunits; this complex drives branch migration. In the full resolvosome a probable DNA-RuvA(4)-RuvB(12)-RuvC(2) complex forms which resolves the HJ.

The protein resides in the cytoplasm. The RuvA-RuvB-RuvC complex processes Holliday junction (HJ) DNA during genetic recombination and DNA repair, while the RuvA-RuvB complex plays an important role in the rescue of blocked DNA replication forks via replication fork reversal (RFR). RuvA specifically binds to HJ cruciform DNA, conferring on it an open structure. The RuvB hexamer acts as an ATP-dependent pump, pulling dsDNA into and through the RuvAB complex. HJ branch migration allows RuvC to scan DNA until it finds its consensus sequence, where it cleaves and resolves the cruciform DNA. The protein is Holliday junction branch migration complex subunit RuvA of Tropheryma whipplei (strain Twist) (Whipple's bacillus).